A 444-amino-acid chain; its full sequence is Proline--tRNA ligase (444 aa).

The protein belongs to the class-II aminoacyl-tRNA synthetase family. ProS type 2 subfamily. Homodimer.

The protein resides in the cytoplasm. It carries out the reaction tRNA(Pro) + L-proline + ATP = L-prolyl-tRNA(Pro) + AMP + diphosphate. In terms of biological role, catalyzes the attachment of proline to tRNA(Pro) in a two-step reaction: proline is first activated by ATP to form Pro-AMP and then transferred to the acceptor end of tRNA(Pro). The sequence is that of Proline--tRNA ligase from Maricaulis maris (strain MCS10) (Caulobacter maris).